The sequence spans 64 residues: Epidermal growth factor (64 aa).

The N-terminal stretch at 1–21 (MMRHLLLVGAAILIFVSDAQA) is a signal peptide. The residue at position 22 (Q22) is a Pyrrolidone carboxylic acid. The EGF-like domain occupies 25 to 61 (GEDPCQIVRCSYGANCIAYGDTAICECPFGYSGIRCQ). 3 disulfide bridges follow: C29–C40, C34–C49, and C51–C60.

Albumen gland. Up-regulated in adult CNS after axotomy.

It is found in the secreted. Its function is as follows. Induces neurite outgrowth in specific adult neurons in vitro. The sequence is that of Epidermal growth factor from Lymnaea stagnalis (Great pond snail).